Here is a 160-residue protein sequence, read N- to C-terminus: Transcription elongation factor GreA (160 aa).

Residues M1–I71 are a coiled coil.

This sequence belongs to the GreA/GreB family.

Functionally, necessary for efficient RNA polymerase transcription elongation past template-encoded arresting sites. The arresting sites in DNA have the property of trapping a certain fraction of elongating RNA polymerases that pass through, resulting in locked ternary complexes. Cleavage of the nascent transcript by cleavage factors such as GreA or GreB allows the resumption of elongation from the new 3'terminus. GreA releases sequences of 2 to 3 nucleotides. This chain is Transcription elongation factor GreA, found in Streptococcus uberis (strain ATCC BAA-854 / 0140J).